The primary structure comprises 204 residues: Thymidine kinase (204 aa).

Residues 18–25 and 91–94 contribute to the ATP site; these read GSMFSGKT and DEGQ. The Proton acceptor role is filled by glutamate 92. Zn(2+)-binding residues include cysteine 148, cysteine 151, cysteine 180, and histidine 183.

The protein belongs to the thymidine kinase family. In terms of assembly, homotetramer.

It is found in the cytoplasm. The enzyme catalyses thymidine + ATP = dTMP + ADP + H(+). This Bdellovibrio bacteriovorus (strain ATCC 15356 / DSM 50701 / NCIMB 9529 / HD100) protein is Thymidine kinase.